The following is a 436-amino-acid chain: UPF0597 protein YhaM (436 aa).

Belongs to the UPF0597 family.

The sequence is that of UPF0597 protein YhaM from Escherichia coli O7:K1 (strain IAI39 / ExPEC).